We begin with the raw amino-acid sequence, 229 residues long: Ribonuclease 3 (229 aa).

The region spanning Leu5–Gly127 is the RNase III domain. Glu40 lines the Mg(2+) pocket. Asp44 is an active-site residue. Residues Asp113 and Glu116 each coordinate Mg(2+). Glu116 is an active-site residue. The DRBM domain maps to Asp154–Val224.

It belongs to the ribonuclease III family. As to quaternary structure, homodimer. Requires Mg(2+) as cofactor.

It localises to the cytoplasm. It carries out the reaction Endonucleolytic cleavage to 5'-phosphomonoester.. Its function is as follows. Digests double-stranded RNA. Involved in the processing of primary rRNA transcript to yield the immediate precursors to the large and small rRNAs (23S and 16S). Processes some mRNAs, and tRNAs when they are encoded in the rRNA operon. Processes pre-crRNA and tracrRNA of type II CRISPR loci if present in the organism. The chain is Ribonuclease 3 from Pseudomonas syringae pv. tomato (strain ATCC BAA-871 / DC3000).